Consider the following 181-residue polypeptide: Cytochrome c oxidase subunit 2 (181 aa).

The Cu cation site is built by Cys126, Glu128, Cys130, His134, and Met137. A Mg(2+)-binding site is contributed by Glu128.

The protein belongs to the cytochrome c oxidase subunit 2 family. Component of the cytochrome c oxidase (complex IV, CIV), a multisubunit enzyme composed of a catalytic core of 3 subunits and several supernumerary subunits. The complex exists as a monomer or a dimer and forms supercomplexes (SCs) in the inner mitochondrial membrane with ubiquinol-cytochrome c oxidoreductase (cytochrome b-c1 complex, complex III, CIII). Cu cation serves as cofactor.

Its subcellular location is the mitochondrion inner membrane. It catalyses the reaction 4 Fe(II)-[cytochrome c] + O2 + 8 H(+)(in) = 4 Fe(III)-[cytochrome c] + 2 H2O + 4 H(+)(out). In terms of biological role, component of the cytochrome c oxidase, the last enzyme in the mitochondrial electron transport chain which drives oxidative phosphorylation. The respiratory chain contains 3 multisubunit complexes succinate dehydrogenase (complex II, CII), ubiquinol-cytochrome c oxidoreductase (cytochrome b-c1 complex, complex III, CIII) and cytochrome c oxidase (complex IV, CIV), that cooperate to transfer electrons derived from NADH and succinate to molecular oxygen, creating an electrochemical gradient over the inner membrane that drives transmembrane transport and the ATP synthase. Cytochrome c oxidase is the component of the respiratory chain that catalyzes the reduction of oxygen to water. Electrons originating from reduced cytochrome c in the intermembrane space (IMS) are transferred via the dinuclear copper A center (CU(A)) of subunit 2 and heme A of subunit 1 to the active site in subunit 1, a binuclear center (BNC) formed by heme A3 and copper B (CU(B)). The BNC reduces molecular oxygen to 2 water molecules using 4 electrons from cytochrome c in the IMS and 4 protons from the mitochondrial matrix. The sequence is that of Cytochrome c oxidase subunit 2 (COII) from Paramecium primaurelia.